A 94-amino-acid polypeptide reads, in one-letter code: ESAT-6-like protein EsxI (94 aa).

It belongs to the WXG100 family. ESAT-6 subfamily.

Its subcellular location is the secreted. This chain is ESAT-6-like protein EsxI, found in Mycobacterium tuberculosis (strain CDC 1551 / Oshkosh).